The sequence spans 1209 residues: ATP-dependent helicase/nuclease subunit A (1209 aa).

The UvrD-like helicase ATP-binding domain maps to 9–482; the sequence is SQWTDEQWQA…IDLAKNFRSR (474 aa). 30 to 37 provides a ligand contact to ATP; that stretch reads AAAGSGKT. The UvrD-like helicase C-terminal domain occupies 510–798; it reads AALRFGAQDY…RMMTIHKSKG (289 aa).

Belongs to the helicase family. AddA subfamily. In terms of assembly, heterodimer of AddA and AddB/RexB. Mg(2+) is required as a cofactor.

It catalyses the reaction Couples ATP hydrolysis with the unwinding of duplex DNA by translocating in the 3'-5' direction.. The enzyme catalyses ATP + H2O = ADP + phosphate + H(+). Functionally, the heterodimer acts as both an ATP-dependent DNA helicase and an ATP-dependent, dual-direction single-stranded exonuclease. Recognizes the chi site generating a DNA molecule suitable for the initiation of homologous recombination. The AddA nuclease domain is required for chi fragment generation; this subunit has the helicase and 3' -&gt; 5' nuclease activities. The polypeptide is ATP-dependent helicase/nuclease subunit A (Anoxybacillus flavithermus (strain DSM 21510 / WK1)).